We begin with the raw amino-acid sequence, 84 residues long: Beta-cardiotoxin CTX14 (84 aa).

An N-terminal signal peptide occupies residues 1-21 (MKTLLLTLVVVTIVCLDLGYT). 4 disulfides stabilise this stretch: Cys-24–Cys-43, Cys-36–Cys-61, Cys-65–Cys-76, and Cys-77–Cys-82.

Belongs to the three-finger toxin family. Short-chain subfamily. Aminergic toxin sub-subfamily. Expressed by the venom gland.

The protein localises to the secreted. Functionally, acts as a beta-blocker by binding to beta-1 and beta-2 adrenergic receptors (ADRB1 and ADRB2). It dose-dependently decreases the heart rate (bradycardia), whereas conventional cardiotoxins increases it. At 100 mg/kg, intraperitoneal injection into mice provokes labored breathing, impaired locomotion, lack of response to external stimuli, and death (after 30 minutes). The sequence is that of Beta-cardiotoxin CTX14 from Ophiophagus hannah (King cobra).